Here is a 1253-residue protein sequence, read N- to C-terminus: Methionine synthase (1253 aa).

The Hcy-binding domain occupies 6–326 (QDEIEAILRK…DHIREIAEAV (321 aa)). C248, C311, and C312 together coordinate Zn(2+). The 262-residue stretch at 359–620 (FVNIGERCNV…IHKDLLQLCE (262 aa)) folds into the Pterin-binding domain. Residues 370-372 (GSR), D437, N458, D525, N567, R573, and R579 contribute to the (6S)-5,6,7,8-tetrahydrofolate site. A B12-binding N-terminal domain is found at 650-747 (QTDEWRNGSI…FMEKEREEAR (98 aa)). Residues E697, 770-774 (GDVHD), H773, S818, T822, and A874 contribute to the methylcob(III)alamin site. The 136-residue stretch at 760–895 (QGTIVLATVK…DENLRDDYFE (136 aa)) folds into the B12-binding domain. The region spanning 911 to 1253 (SLKERKYVPL…LGPILGYDTD (343 aa)) is the AdoMet activation domain. S-adenosyl-L-methionine contacts are provided by residues D962, R1160, and 1215 to 1216 (YF). T1252 is modified (phosphothreonine).

This sequence belongs to the vitamin-B12 dependent methionine synthase family. In terms of assembly, monomer. Dimer. Forms a multiprotein complex with MMACHC, MMADHC and MTRR. It depends on methylcob(III)alamin as a cofactor. Zn(2+) serves as cofactor.

It is found in the cytoplasm. It catalyses the reaction (6S)-5-methyl-5,6,7,8-tetrahydrofolate + L-homocysteine = (6S)-5,6,7,8-tetrahydrofolate + L-methionine. It functions in the pathway amino-acid biosynthesis; L-methionine biosynthesis via de novo pathway; L-methionine from L-homocysteine (MetH route): step 1/1. Catalyzes the transfer of a methyl group from methylcob(III)alamin (MeCbl) to homocysteine, yielding enzyme-bound cob(I)alamin and methionine in the cytosol. MeCbl is an active form of cobalamin (vitamin B12) used as a cofactor for methionine biosynthesis. Cob(I)alamin form is regenerated to MeCbl by a transfer of a methyl group from 5-methyltetrahydrofolate. The processing of cobalamin in the cytosol occurs in a multiprotein complex composed of at least MMACHC, MMADHC, MTRR (methionine synthase reductase) and MTR which may contribute to shuttle safely and efficiently cobalamin towards MTR in order to produce methionine. This Mus musculus (Mouse) protein is Methionine synthase.